The sequence spans 690 residues: Elongation factor G (690 aa).

Positions 8-283 (EDYRNFGIMA…AVVDYLPSPI (276 aa)) constitute a tr-type G domain. GTP is bound by residues 17–24 (AHIDAGKT), 81–85 (DTPGH), and 135–138 (NKMD).

The protein belongs to the TRAFAC class translation factor GTPase superfamily. Classic translation factor GTPase family. EF-G/EF-2 subfamily.

It is found in the cytoplasm. Functionally, catalyzes the GTP-dependent ribosomal translocation step during translation elongation. During this step, the ribosome changes from the pre-translocational (PRE) to the post-translocational (POST) state as the newly formed A-site-bound peptidyl-tRNA and P-site-bound deacylated tRNA move to the P and E sites, respectively. Catalyzes the coordinated movement of the two tRNA molecules, the mRNA and conformational changes in the ribosome. The sequence is that of Elongation factor G from Bradyrhizobium diazoefficiens (strain JCM 10833 / BCRC 13528 / IAM 13628 / NBRC 14792 / USDA 110).